A 257-amino-acid chain; its full sequence is MMRYALGVEYDGSEFLGWQQLGEMGPSVQATLQQALASVADASVRVVCAGRTDAGVHGQCQVVHFDSAVTRPPRAWILGTTTRLPSSVAVRWCVPTSEDFHARFSACARRYRYRLLNRQVRPALQHQFLSWERYPLDAQAMHVAAQMLLGENDFSAFRSAQCQALHARRELQAISVRRDAEVIEICVQANAFLHHMVRNIVGSLLMVGTGERPMEWIAELLAGRDRTMAGPTASARGLVFVGPLYPEKWHLPMEVSV.

Asp53 (nucleophile) is an active-site residue. Tyr111 contributes to the substrate binding site.

Belongs to the tRNA pseudouridine synthase TruA family. In terms of assembly, homodimer.

It carries out the reaction uridine(38/39/40) in tRNA = pseudouridine(38/39/40) in tRNA. Formation of pseudouridine at positions 38, 39 and 40 in the anticodon stem and loop of transfer RNAs. The protein is tRNA pseudouridine synthase A of Xylella fastidiosa (strain M12).